A 1344-amino-acid chain; its full sequence is Myb-binding protein 1A (1344 aa).

A disordered region spans residues 1–24; that stretch reads MAEMKSPTKAEPASPAEAPQGDRR. A2 bears the N-acetylalanine mark. Residues 2-580 are interaction with MYB; that stretch reads AEMKSPTKAE…WDQMMSTLKE (579 aa). At S14 the chain carries Phosphoserine. Residues K69 and K156 each carry the N6-acetyllysine modification. 2 short sequence motifs (nuclear export signal) span residues 238–256 and 261–279; these read SEDNIPSLVNILKVAANSV and KLPDVALNLLRLALQENKF. Disordered stretches follow at residues 696–752 and 1150–1344; these read NEDE…DVDP and PKSE…VQTP. The span at 708 to 730 shows a compositional bias: basic and acidic residues; the sequence is TDEKQLKHGEDADSDSEDSKNSE. The span at 731 to 746 shows a compositional bias: acidic residues; sequence SDVDSEDGEESEEEDR. Residues 1150–1161 show a composition bias toward basic and acidic residues; it reads PKSEKKNVKDIP. K1151 participates in a covalent cross-link: Glycyl lysine isopeptide (Lys-Gly) (interchain with G-Cter in SUMO2). The interval 1154–1344 is required for nuclear and nucleolar localization; sequence KKNVKDIPSD…RVARRRVQTP (191 aa). 2 positions are modified to phosphoserine: S1162 and S1166. Basic residues predominate over residues 1170-1187; the sequence is TKRKKKGFLPETKKRKKL. S1189 bears the Phosphoserine mark. The residue at position 1193 (T1193) is a Phosphothreonine. Phosphoserine is present on residues S1221 and S1246. Positions 1247-1256 are enriched in low complexity; that stretch reads PAPNNPTLSP. At T1253 the chain carries Phosphothreonine. S1255 bears the Phosphoserine mark. Phosphothreonine occurs at positions 1258 and 1280. Phosphoserine occurs at positions 1283, 1305, and 1318. Positions 1301 to 1316 are enriched in basic residues; sequence VKRRSSQSALPKKRAR. Positions 1317–1329 are enriched in low complexity; the sequence is LSLVSRSPSLLQS. R1322 carries the citrulline modification. 3 positions are modified to phosphoserine: S1323, S1325, and S1329. The span at 1331–1344 shows a compositional bias: basic residues; that stretch reads IRKRRVARRRVQTP.

The protein belongs to the MYBBP1A family. Binds to and represses JUN and MYB via the leucine zipper regions present in these proteins. Also binds to and represses PPARGC1A: this interaction is abrogated when PPARGC1A is phosphorylated by MAPK1/ERK. Binds to and stimulates transcription by AHR. Binds to KPNA2. Component of the B-WICH complex, at least composed of SMARCA5/SNF2H, BAZ1B/WSTF, SF3B1, DEK, MYO1C, ERCC6, MYBBP1A and DDX21. Interacts with CLOCK and CRY1. Post-translationally, citrullinated by PADI4.

It is found in the nucleus. The protein resides in the nucleolus. The protein localises to the cytoplasm. Its function is as follows. May activate or repress transcription via interactions with sequence specific DNA-binding proteins. Repression may be mediated at least in part by histone deacetylase activity (HDAC activity). Acts as a corepressor and in concert with CRY1, represses the transcription of the core circadian clock component PER2. Preferentially binds to dimethylated histone H3 'Lys-9' (H3K9me2) on the PER2 promoter. Has a role in rRNA biogenesis together with PWP1. The protein is Myb-binding protein 1A (Mybbp1a) of Rattus norvegicus (Rat).